Reading from the N-terminus, the 66-residue chain is Large ribosomal subunit protein uL29 (66 aa).

The protein belongs to the universal ribosomal protein uL29 family.

This Allorhizobium ampelinum (strain ATCC BAA-846 / DSM 112012 / S4) (Agrobacterium vitis (strain S4)) protein is Large ribosomal subunit protein uL29.